The primary structure comprises 154 residues: UPF0178 protein YaiI (154 aa).

It belongs to the UPF0178 family.

The protein is UPF0178 protein YaiI of Escherichia fergusonii (strain ATCC 35469 / DSM 13698 / CCUG 18766 / IAM 14443 / JCM 21226 / LMG 7866 / NBRC 102419 / NCTC 12128 / CDC 0568-73).